The sequence spans 442 residues: Adenylosuccinate synthetase (442 aa).

Residues Gly25–Lys31, Gly53–Thr55, and Lys62 contribute to the GTP site. Asp26 serves as the catalytic Proton acceptor. Positions 26 and 53 each coordinate Mg(2+). Residues Asp26 to Lys29 and Asn51 to His54 contribute to the IMP site. Catalysis depends on His54, which acts as the Proton donor. IMP contacts are provided by Thr141, Arg155, Asn232, and Thr247. Residue Thr307 participates in GTP binding. Thr307–Arg313 is a binding site for substrate. Residue Arg311 coordinates IMP. Residues Arg313, Lys339 to Asp341, and Gly425 to Gly427 contribute to the GTP site.

The protein belongs to the adenylosuccinate synthetase family. As to quaternary structure, homodimer. Mg(2+) serves as cofactor.

The protein resides in the cytoplasm. It catalyses the reaction IMP + L-aspartate + GTP = N(6)-(1,2-dicarboxyethyl)-AMP + GDP + phosphate + 2 H(+). It functions in the pathway purine metabolism; AMP biosynthesis via de novo pathway; AMP from IMP: step 1/2. With respect to regulation, inhibited by hadacidin. Activated by fructose 1,6-bisphosphate. Functionally, plays an important role in the salvage pathway for purine nucleotide biosynthesis. Catalyzes the first committed step in the biosynthesis of AMP from IMP. This Plasmodium falciparum protein is Adenylosuccinate synthetase (Adss).